Here is a 273-residue protein sequence, read N- to C-terminus: MENKKSFFHLHLISDSTGETLMSAGRAVSAQFHTSMPVEHVYPMIRNQKQLAQVIDLIDKEPGIVLYTIVDQQLAEFLDLRCHAIGVPCVNVLEPIIGIFQTYLGAPSRRRVGAQHALNADYFARIEALNFAMDHDDGQMPETYDDADVVIIGISRTSKTPTSIYLANRGIKTANIPVVPNVPLPESLYAATRPLIVGLVATSDRISQVRENRDLGTTGGFDGGRYTDRATIMEELKYARALCARNNWPLIDVTRRSIEETAAAILALRPRTR.

Residue 153-160 (GISRTSKT) participates in ADP binding.

This sequence belongs to the pyruvate, phosphate/water dikinase regulatory protein family. PDRP subfamily.

The catalysed reaction is N(tele)-phospho-L-histidyl/L-threonyl-[pyruvate, phosphate dikinase] + ADP = N(tele)-phospho-L-histidyl/O-phospho-L-threonyl-[pyruvate, phosphate dikinase] + AMP + H(+). It carries out the reaction N(tele)-phospho-L-histidyl/O-phospho-L-threonyl-[pyruvate, phosphate dikinase] + phosphate + H(+) = N(tele)-phospho-L-histidyl/L-threonyl-[pyruvate, phosphate dikinase] + diphosphate. Bifunctional serine/threonine kinase and phosphorylase involved in the regulation of the pyruvate, phosphate dikinase (PPDK) by catalyzing its phosphorylation/dephosphorylation. This Agrobacterium fabrum (strain C58 / ATCC 33970) (Agrobacterium tumefaciens (strain C58)) protein is Putative pyruvate, phosphate dikinase regulatory protein.